The following is a 125-amino-acid chain: Cu-Zn superoxide dismutase-like protein OPG175 (125 aa).

Cysteines 52 and 102 form a disulfide.

Belongs to the Cu-Zn superoxide dismutase family.

The protein resides in the virion. Its subcellular location is the host cytoplasm. Its function is as follows. Superoxide dismutase-like protein with no enzymatic activity. The protein is Cu-Zn superoxide dismutase-like protein OPG175 (OPG175) of Cowpox virus (strain Brighton Red) (CPV).